Consider the following 149-residue polypeptide: Large ribosomal subunit protein uL15 (149 aa).

Basic residues-rich tracts occupy residues 1–14 and 21–30; these read MPSRFTKTRKHRGH and RIGKHRKHPG. Residues 1 to 39 are disordered; the sequence is MPSRFTKTRKHRGHVSAGKGRIGKHRKHPGGRGMAGGQH. Short sequence motifs (nuclear localization signal) lie at residues 7–13 and 24–30; these read KTRKHRG and KHRKHPG. A Glycyl lysine isopeptide (Lys-Gly) (interchain with G-Cter in ubiquitin) cross-link involves residue Lys96.

The protein belongs to the universal ribosomal protein uL15 family. In terms of assembly, component of the large ribosomal subunit (LSU). Mature yeast ribosomes consist of a small (40S) and a large (60S) subunit. The 40S small subunit contains 1 molecule of ribosomal RNA (18S rRNA) and 33 different proteins (encoded by 57 genes). The large 60S subunit contains 3 rRNA molecules (25S, 5.8S and 5S rRNA) and 46 different proteins (encoded by 81 genes).

Its subcellular location is the cytoplasm. Its function is as follows. Component of the ribosome, a large ribonucleoprotein complex responsible for the synthesis of proteins in the cell. The small ribosomal subunit (SSU) binds messenger RNAs (mRNAs) and translates the encoded message by selecting cognate aminoacyl-transfer RNA (tRNA) molecules. The large subunit (LSU) contains the ribosomal catalytic site termed the peptidyl transferase center (PTC), which catalyzes the formation of peptide bonds, thereby polymerizing the amino acids delivered by tRNAs into a polypeptide chain. The nascent polypeptides leave the ribosome through a tunnel in the LSU and interact with protein factors that function in enzymatic processing, targeting, and the membrane insertion of nascent chains at the exit of the ribosomal tunnel. This Saccharomyces cerevisiae (strain ATCC 204508 / S288c) (Baker's yeast) protein is Large ribosomal subunit protein uL15.